A 577-amino-acid chain; its full sequence is Proton channel OTOP3 (577 aa).

Residues 1-46 (MASQTSAPAEPAPMPSPEAKTTEGASSYDQADMETKHAGSPCPPKQ) are disordered. Over 1 to 69 (MASQTSAPAE…RDRQAQKAGQ (69 aa)) the chain is Cytoplasmic. Residues 70-90 (LFSGLLALNVVFLGGAFICSM) form a helical membrane-spanning segment. Residues 91–100 (IFNKVSVTLG) lie on the Extracellular side of the membrane. The chain crosses the membrane as a helical span at residues 101 to 124 (DVWILLAALKVLSLLWLLYYTVGT). Topologically, residues 125–140 (TRKPHAVLYRDPHAGP) are cytoplasmic. A helical transmembrane segment spans residues 141-162 (IWVRGSLVLFGSCTVCLNIFRM). Over 163–174 (GYDVSHIHCKSE) the chain is Extracellular. The helical transmembrane segment at 175–198 (VELIFPAIEIVFMIIQTWVLWRHC) threads the bilayer. The Cytoplasmic portion of the chain corresponds to 199-206 (KDCVQVQT). The chain crosses the membrane as a helical span at residues 207–229 (NFTRCGLMLTLATNLLMWVLAVT). Residues 230–276 (NDSMHREIEAELDALMEKFSGNGTNTCMCLNTTVCEVFRKGYLMLYP) are Extracellular-facing. Residues 277-293 (FSTEYCLICCAVLFVMW) form a helical membrane-spanning segment. The Cytoplasmic segment spans residues 294 to 319 (KNVSRSLAAHTGAHPNRSPFRLHGTI). The helical transmembrane segment at 320–339 (FGPLLGLLALVAGVCVFVLF) threads the bilayer. Residues 340–353 (QIEASGPDIARQYF) are Extracellular-facing. A helical transmembrane segment spans residues 354 to 376 (TLYYAFYVAVLPTMSLACLAGTA). At 377 to 394 (IHGLEERELDTLKNPTRS) the chain is on the cytoplasmic side. A helical transmembrane segment spans residues 395-416 (LDVVLLMGAALGQMGIAYFSIV). The Extracellular portion of the chain corresponds to 417-427 (AIVATQPHELL). The helical transmembrane segment at 428 to 450 (NQLILAYSLLLILQHITQNLFII) threads the bilayer. At 451–510 (EGLHRRPLWEPAVSGVMEKQDVELPRRGSLRELGQDLRRASRAYIHSFSHLNWKRRMLKE) the chain is on the cytoplasmic side. The helical transmembrane segment at 511–528 (ISLFLILCNITLWMMPAF) threads the bilayer. Residues 529–547 (GIHPEFENGLEKDFYGYRT) are Extracellular-facing. Residues 548-570 (WFTIVNFGLPLGVFYRMHSVGGL) traverse the membrane as a helical segment. Topologically, residues 571-577 (VEVYLGA) are cytoplasmic.

It belongs to the otopetrin family. As to quaternary structure, homodimer. Expressed in epidermis, small intestine, stomach and retina.

Its subcellular location is the cell membrane. It catalyses the reaction H(+)(in) = H(+)(out). Its activity is regulated as follows. Activated by extracellular acidification. Activated by Zn(2+) under non-acidic conditions. Proton-selective channel gated by extracellular protons. The chain is Proton channel OTOP3 from Mus musculus (Mouse).